Reading from the N-terminus, the 362-residue chain is Chorismate synthase (362 aa).

Arg48 and Arg54 together coordinate NADP(+). Residues 131–133 (RSS), 243–244 (NA), Gly287, 302–306 (KPTSS), and Arg328 each bind FMN.

Belongs to the chorismate synthase family. Homotetramer. The cofactor is FMNH2.

The enzyme catalyses 5-O-(1-carboxyvinyl)-3-phosphoshikimate = chorismate + phosphate. Its pathway is metabolic intermediate biosynthesis; chorismate biosynthesis; chorismate from D-erythrose 4-phosphate and phosphoenolpyruvate: step 7/7. Its function is as follows. Catalyzes the anti-1,4-elimination of the C-3 phosphate and the C-6 proR hydrogen from 5-enolpyruvylshikimate-3-phosphate (EPSP) to yield chorismate, which is the branch point compound that serves as the starting substrate for the three terminal pathways of aromatic amino acid biosynthesis. This reaction introduces a second double bond into the aromatic ring system. This chain is Chorismate synthase, found in Rhodopseudomonas palustris (strain TIE-1).